A 156-amino-acid chain; its full sequence is ATP synthase subunit b (156 aa).

The chain crosses the membrane as a helical span at residues 5–25; sequence LTLIGQAIAFAFFVAFCMKFV.

Belongs to the ATPase B chain family. As to quaternary structure, F-type ATPases have 2 components, F(1) - the catalytic core - and F(0) - the membrane proton channel. F(1) has five subunits: alpha(3), beta(3), gamma(1), delta(1), epsilon(1). F(0) has three main subunits: a(1), b(2) and c(10-14). The alpha and beta chains form an alternating ring which encloses part of the gamma chain. F(1) is attached to F(0) by a central stalk formed by the gamma and epsilon chains, while a peripheral stalk is formed by the delta and b chains.

Its subcellular location is the cell inner membrane. F(1)F(0) ATP synthase produces ATP from ADP in the presence of a proton or sodium gradient. F-type ATPases consist of two structural domains, F(1) containing the extramembraneous catalytic core and F(0) containing the membrane proton channel, linked together by a central stalk and a peripheral stalk. During catalysis, ATP synthesis in the catalytic domain of F(1) is coupled via a rotary mechanism of the central stalk subunits to proton translocation. In terms of biological role, component of the F(0) channel, it forms part of the peripheral stalk, linking F(1) to F(0). The chain is ATP synthase subunit b from Acinetobacter baumannii (strain SDF).